The primary structure comprises 165 residues: uncharacterized protein (165 aa).

Residues Gln-28–Lys-139 enclose the Cupin type-1 domain.

This is an uncharacterized protein from Bacillus subtilis (strain 168).